The sequence spans 196 residues: Adenylate kinase (196 aa).

9-17 lines the ATP pocket; sequence GIPGVGKST.

This sequence belongs to the archaeal adenylate kinase family.

The protein resides in the cytoplasm. It carries out the reaction AMP + ATP = 2 ADP. The sequence is that of Adenylate kinase from Thermococcus onnurineus (strain NA1).